A 114-amino-acid chain; its full sequence is Hemerythrin subunit 1 (114 aa).

Fe cation contacts are provided by H26, H55, E59, H74, H78, H102, and D107.

The protein belongs to the hemerythrin family.

In terms of biological role, hemerythrin is a respiratory protein in blood cells of certain marine worms. The oxygen-binding site in each chain contains two iron atoms. This chain is Hemerythrin subunit 1, found in Golfingia vulgaris (Marine worm).